The sequence spans 180 residues: ATP-dependent protease subunit HslV (180 aa).

Thr7 is an active-site residue. Na(+)-binding residues include Ala164, Cys167, and Thr170.

Belongs to the peptidase T1B family. HslV subfamily. A double ring-shaped homohexamer of HslV is capped on each side by a ring-shaped HslU homohexamer. The assembly of the HslU/HslV complex is dependent on binding of ATP.

It localises to the cytoplasm. It catalyses the reaction ATP-dependent cleavage of peptide bonds with broad specificity.. With respect to regulation, allosterically activated by HslU binding. Its function is as follows. Protease subunit of a proteasome-like degradation complex believed to be a general protein degrading machinery. This Brevibacillus brevis (strain 47 / JCM 6285 / NBRC 100599) protein is ATP-dependent protease subunit HslV.